A 384-amino-acid chain; its full sequence is Methylthioribose-1-phosphate isomerase (384 aa).

The active-site Proton donor is the D255.

This sequence belongs to the eIF-2B alpha/beta/delta subunits family. MtnA subfamily.

It is found in the cytoplasm. The protein localises to the nucleus. The enzyme catalyses 5-(methylsulfanyl)-alpha-D-ribose 1-phosphate = 5-(methylsulfanyl)-D-ribulose 1-phosphate. It functions in the pathway amino-acid biosynthesis; L-methionine biosynthesis via salvage pathway; L-methionine from S-methyl-5-thio-alpha-D-ribose 1-phosphate: step 1/6. In terms of biological role, catalyzes the interconversion of methylthioribose-1-phosphate (MTR-1-P) into methylthioribulose-1-phosphate (MTRu-1-P). This chain is Methylthioribose-1-phosphate isomerase (mri1), found in Talaromyces stipitatus (strain ATCC 10500 / CBS 375.48 / QM 6759 / NRRL 1006) (Penicillium stipitatum).